Here is a 171-residue protein sequence, read N- to C-terminus: Co-chaperone protein HscB homolog (171 aa).

The region spanning 3–75 (SHFALFDLEP…SQRARYLLSL (73 aa)) is the J domain.

This sequence belongs to the HscB family. In terms of assembly, interacts with HscA and stimulates its ATPase activity.

Functionally, co-chaperone involved in the maturation of iron-sulfur cluster-containing proteins. Seems to help targeting proteins to be folded toward HscA. This chain is Co-chaperone protein HscB homolog, found in Azotobacter vinelandii.